Consider the following 218-residue polypeptide: Peptidyl-prolyl cis-trans isomerase FKBP7 (218 aa).

The N-terminal stretch at 1–19 (MNLLFRLAVFLSLWCCSDA) is a signal peptide. N-linked (GlcNAc...) asparagine glycosylation is found at N41 and N128. The PPIase FKBP-type domain maps to 49-141 (GDLLNAHYDG…MFEIELYAVT (93 aa)). EF-hand domains are found at residues 141–176 (TKGPRSIETFKQIDTDNDRQLSKAEIELYLQKDFEK) and 185–218 (YQKAVLEDIFKKNDHNGDGFISPKEYNVHQHDEL). D154, D156, D158, Q160, E165, D198, N200, D202, and E209 together coordinate Ca(2+). Residues 197–218 (NDHNGDGFISPKEYNVHQHDEL) are disordered. Positions 215–218 (HDEL) match the Prevents secretion from ER motif.

Glycosylated. In terms of tissue distribution, expressed at highest levels in heart, lung and testis. Weakly expressed in kidney and lymph node. Little or no expression detected in brain, thymus, spleen and liver.

It localises to the endoplasmic reticulum lumen. The catalysed reaction is [protein]-peptidylproline (omega=180) = [protein]-peptidylproline (omega=0). Its function is as follows. PPIases accelerate the folding of proteins during protein synthesis. In Mus musculus (Mouse), this protein is Peptidyl-prolyl cis-trans isomerase FKBP7 (Fkbp7).